The sequence spans 865 residues: Chitin synthase 3 (865 aa).

Residues 1–59 (MASQYPGHQLDDIPSTNVYRPPPRHEDDEAEHALLHQNSAYQSQYDDPHSRPLTPGQES) form a disordered region. Basic and acidic residues predominate over residues 23–34 (PRHEDDEAEHAL). Over residues 36 to 45 (HQNSAYQSQY) the composition is skewed to polar residues. N-linked (GlcNAc...) asparagine glycans are attached at residues asparagine 64, asparagine 95, and asparagine 538. 3 consecutive transmembrane segments (helical) span residues 565–585 (FFLH…WFSL), 620–640 (IINT…FILA), and 650–670 (VAYI…IVLS). N-linked (GlcNAc...) asparagine glycosylation occurs at asparagine 682. 3 helical membrane passes run 707-727 (IVII…FLYM), 735-755 (SFAQ…IYAF), and 837-857 (LVAT…SDSL).

Belongs to the chitin synthase family. Class III subfamily.

Its subcellular location is the cell membrane. The enzyme catalyses [(1-&gt;4)-N-acetyl-beta-D-glucosaminyl](n) + UDP-N-acetyl-alpha-D-glucosamine = [(1-&gt;4)-N-acetyl-beta-D-glucosaminyl](n+1) + UDP + H(+). In terms of biological role, polymerizes chitin, a structural polymer of the cell wall and septum, by transferring the sugar moiety of UDP-GlcNAc to the non-reducing end of the growing chitin polymer. Is not only stable at different pH, but is also able to tolerate a broad temperature range. With CHS2, plays an important role in virulence. In Exophiala dermatitidis (strain ATCC 34100 / CBS 525.76 / NIH/UT8656) (Black yeast), this protein is Chitin synthase 3.